Reading from the N-terminus, the 858-residue chain is Potassium transporter 7 (858 aa).

Composition is skewed to acidic residues over residues 1–16 (MAEE…EEID) and 38–53 (QDDD…DNDG). The tract at residues 1 to 68 (MAEESSMEGS…LESDEDEIPE (68 aa)) is disordered. Residues 1–104 (MAEESSMEGS…DYEDLTVGRK (104 aa)) are Cytoplasmic-facing. The chain crosses the membrane as a helical span at residues 105-125 (VLLAFQTLGVVFGDVGTSPLY). The Extracellular portion of the chain corresponds to 126–147 (TFSVMFSKSPVQEKEDVIGALS). A helical transmembrane segment spans residues 148–168 (LVLYTLLLVPLIKYVLVVLWA). The Cytoplasmic portion of the chain corresponds to 169–232 (NDDGEGGTFA…KLENSLILKK (64 aa)). Residues 233 to 253 (ILLVLVLAGTSMVIADGVVTP) traverse the membrane as a helical segment. The Extracellular portion of the chain corresponds to 254-269 (AMSVMSAVGGLKVGVD). The helical transmembrane segment at 270 to 290 (VVEQDQVVMISVAFLVILFSL) threads the bilayer. The Cytoplasmic portion of the chain corresponds to 291–297 (QKYGTSK). The chain crosses the membrane as a helical span at residues 298-318 (MGLVVGPALLIWFCSLAGIGI). The Extracellular portion of the chain corresponds to 319–345 (YNLIKYDSSVYRAFNPVHIYYFFKRNS). The helical transmembrane segment at 346 to 366 (INAWYALGGCILCATGSEALF) threads the bilayer. The Cytoplasmic segment spans residues 367–380 (ADLCYFSVRSVQLT). The chain crosses the membrane as a helical span at residues 381–401 (FVCLVLPCLMLGYMGQAAYLM). Residues 402 to 413 (ENHADASQAFFS) lie on the Extracellular side of the membrane. Residues 414 to 434 (SVPGSAFWPVLFIANIAALIA) form a helical membrane-spanning segment. Over 435–470 (SRTMTTATFSCIKQSTALGCFPRLKIIHTSRKFMGQ) the chain is Cytoplasmic. The helical transmembrane segment at 471–491 (IYIPVLNWFLLAVCLVVVCSI) threads the bilayer. Over 492-496 (SSIDE) the chain is Extracellular. The helical transmembrane segment at 497 to 517 (IGNAYGMAELGVMMTTTILVT) threads the bilayer. Leucine 518 is a topological domain (cytoplasmic). A helical transmembrane segment spans residues 519–539 (IMLLIWQINIVIVIAFLVVFL). Topologically, residues 540–552 (GVELVFFSSVIAS) are extracellular. Residues 553–573 (VGDGSWIILVFAVIMFGIMYI) form a helical membrane-spanning segment. Residues 574–858 (WNYGSKLRYE…LMQVGMTYMV (285 aa)) lie on the Cytoplasmic side of the membrane. The interval 707–731 (QERSLESDGNDDSDSEEDFPGSRVV) is disordered. Positions 714–725 (DGNDDSDSEEDF) are enriched in acidic residues. Phosphoserine occurs at positions 719 and 721.

It belongs to the HAK/KUP transporter (TC 2.A.72.3) family.

It is found in the cell membrane. Probable potassium transporter. The sequence is that of Potassium transporter 7 (POT7) from Arabidopsis thaliana (Mouse-ear cress).